We begin with the raw amino-acid sequence, 257 residues long: Tryptophan synthase alpha chain (257 aa).

Active-site proton acceptor residues include E44 and D55.

Belongs to the TrpA family. As to quaternary structure, tetramer of two alpha and two beta chains.

The enzyme catalyses (1S,2R)-1-C-(indol-3-yl)glycerol 3-phosphate + L-serine = D-glyceraldehyde 3-phosphate + L-tryptophan + H2O. The protein operates within amino-acid biosynthesis; L-tryptophan biosynthesis; L-tryptophan from chorismate: step 5/5. The alpha subunit is responsible for the aldol cleavage of indoleglycerol phosphate to indole and glyceraldehyde 3-phosphate. In Chlamydia caviae (strain ATCC VR-813 / DSM 19441 / 03DC25 / GPIC) (Chlamydophila caviae), this protein is Tryptophan synthase alpha chain.